We begin with the raw amino-acid sequence, 122 residues long: Conotoxin flf14c (122 aa).

The N-terminal stretch at 1 to 22 (MGFRVLVLIVMVTTSALPFTFS) is a signal peptide. The propeptide occupies 23 to 96 (EESGRSPFRP…AESPVGQKRW (74 aa)). The interval 53-89 (RADGQTPDMHQPEMRRPEMRRPEVRRPEVRQPEFAES) is disordered. Positions 62–85 (HQPEMRRPEMRRPEVRRPEVRQPE) are enriched in basic and acidic residues. 2 cysteine pairs are disulfide-bonded: Cys101–Cys121 and Cys105–Cys117.

As to expression, expressed by the venom duct.

Its subcellular location is the secreted. This Conus anabathrum floridanus (Florida cone) protein is Conotoxin flf14c.